Here is a 392-residue protein sequence, read N- to C-terminus: 5-amino-6-(D-ribitylamino)uracil--L-tyrosine 4-hydroxyphenyl transferase (392 aa).

A Radical SAM core domain is found at 60–307 (VTYVVNRNIN…MAIARLYLGK (248 aa)). Residues C74, C78, and C81 each contribute to the [4Fe-4S] cluster site.

The protein belongs to the radical SAM superfamily. CofH family. In terms of assembly, consists of two subunits, CofG and CofH. [4Fe-4S] cluster serves as cofactor.

The enzyme catalyses 5-amino-6-(D-ribitylamino)uracil + L-tyrosine + S-adenosyl-L-methionine = 5-amino-5-(4-hydroxybenzyl)-6-(D-ribitylimino)-5,6-dihydrouracil + 2-iminoacetate + 5'-deoxyadenosine + L-methionine + H(+). It functions in the pathway cofactor biosynthesis; coenzyme F0 biosynthesis. Catalyzes the radical-mediated synthesis of 5-amino-5-(4-hydroxybenzyl)-6-(D-ribitylimino)-5,6-dihydrouracil from 5-amino-6-(D-ribitylamino)uracil and L-tyrosine. In Synechocystis sp. (strain ATCC 27184 / PCC 6803 / Kazusa), this protein is 5-amino-6-(D-ribitylamino)uracil--L-tyrosine 4-hydroxyphenyl transferase.